The chain runs to 250 residues: MAPYRIVFIRHGESVYNEENRFCGWHDADLSGQGITEAKQAGQLLRQNHFTFDIAYTSVLKRAIKTLNFVLDELDLNWIPVTKTWRLNERMYGALQGLNKSETAAKHGEEQVKIWRRAYDIPPPPVDISDPRFPGNEPKYALLDSSCIPRTECLKDTVQRVLPFWFDTISASIKRREQVLIVAHGNSLRALIKYLDNTSDSDIVELNIPTGIPLVYELDANLKPTKHYYLADEATVAAAIARVANQGKKK.

(2R)-2,3-bisphosphoglycerate is bound by residues Arg10, His11, Asn17, Gly24, Arg62, Glu89, Tyr92, Lys100, Arg116, Arg117, His184, Gly185, and Asn186. His11 (tele-phosphohistidine intermediate) is an active-site residue. Gly24 contributes to the (2R)-3-phosphoglycerate binding site. 5 residues coordinate (2R)-3-phosphoglycerate: Glu89, Tyr92, Lys100, Arg116, and Arg117. The Proton donor/acceptor role is filled by Glu89. Asn186 is a binding site for (2R)-3-phosphoglycerate.

It belongs to the phosphoglycerate mutase family. BPG-dependent PGAM subfamily. As to expression, ubiquitously expressed with the highest expression in the sub-tegumental muscle layer (at protein level). Expressed in the tegument (at protein level).

The protein localises to the tegument. It carries out the reaction (2R)-2-phosphoglycerate = (2R)-3-phosphoglycerate. Its pathway is carbohydrate degradation; glycolysis; pyruvate from D-glyceraldehyde 3-phosphate: step 3/5. With respect to regulation, strongly activated by 2,3-bisphosphoglycerate (2,3-BPG). Inhibited by vanadate in a dose-dependent manner. Catalyzes interconversion of 3- and 2-phosphoglycerate with 2,3-bisphosphoglycerate (2,3-BPG) as the primer of the reaction. Schistosomula have significant surface phosphoglycerate mutase activity also without 2,3-BPG. Binds human plasminogen and enhances its conversion to active thrombolytic plasmin in the presence of human tissue plasminogen activator (tPA) in vitro. Host-interactive surface protein, which may degrade vascular blood clots surrounding the worm in vivo and thus may help survival of the parasite in its host microenvironment. The protein is 2,3-bisphosphoglycerate-dependent phosphoglycerate mutase of Schistosoma mansoni (Blood fluke).